Reading from the N-terminus, the 80-residue chain is Putative membrane protein insertion efficiency factor (80 aa).

Residues 61-80 form a disordered region; that stretch reads KTGKDPVPDHFSLKRNQEGE. Basic and acidic residues predominate over residues 62-80; the sequence is TGKDPVPDHFSLKRNQEGE.

Belongs to the UPF0161 family.

It localises to the cell membrane. Its function is as follows. Could be involved in insertion of integral membrane proteins into the membrane. The protein is Putative membrane protein insertion efficiency factor of Streptococcus pneumoniae (strain 70585).